Here is an 82-residue protein sequence, read N- to C-terminus: Small ribosomal subunit protein bS16 (82 aa).

The protein belongs to the bacterial ribosomal protein bS16 family.

The sequence is that of Small ribosomal subunit protein bS16 from Shewanella sp. (strain MR-4).